We begin with the raw amino-acid sequence, 166 residues long: Cofilin-1 (166 aa).

A2 bears the N-acetylalanine mark. S3 and S8 each carry phosphoserine. Residues 4-153 (GVAVSDGVIK…KDRCTLAEKL (150 aa)) form the ADF-H domain. K13 carries the N6-acetyllysine modification. T25 is modified (phosphothreonine). Residues 30 to 34 (KKRKK) carry the Nuclear localization signal motif. S41 carries the post-translational modification Phosphoserine. Phosphothreonine is present on T63. Residue Y68 is modified to Phosphotyrosine. At K73 the chain carries N6-acetyllysine. Y82 is modified (phosphotyrosine). Residue K132 forms a Glycyl lysine isopeptide (Lys-Gly) (interchain with G-Cter in SUMO2) linkage. Residue Y140 is modified to Phosphotyrosine. K144 carries the N6-acetyllysine modification. The residue at position 156 (S156) is a Phosphoserine.

This sequence belongs to the actin-binding proteins ADF family. As to quaternary structure, can bind G- and F-actin in a 1:1 ratio of cofilin to actin. It is a major component of intranuclear and cytoplasmic actin rods. Interacts with the subcortical maternal complex (SCMC) via interaction with TLE6 and NLRP5. Interacts with C9orf72. Post-translationally, inactivated by phosphorylation on Ser-3. Phosphorylated on Ser-3 in resting cells. Dephosphorylated by PDXP/chronophin; this restores its activity in promoting actin filament depolymerization. The phosphorylation of Ser-24 may prevent recognition of the nuclear localization signal. Phosphorylated via a ARRB1-RAC1-LIMK1-PAK1 cascade upon active ligand stimulation of atypical chemokine receptor ACKR2. In terms of tissue distribution, widely distributed in various tissues. Not found in skeletal muscle.

It is found in the nucleus matrix. The protein localises to the cytoplasm. It localises to the cytoskeleton. The protein resides in the cell projection. Its subcellular location is the ruffle membrane. It is found in the lamellipodium membrane. The protein localises to the lamellipodium. It localises to the growth cone. The protein resides in the axon. In terms of biological role, binds to F-actin and exhibits pH-sensitive F-actin depolymerizing activity. In conjunction with the subcortical maternal complex (SCMC), plays an essential role for zygotes to progress beyond the first embryonic cell divisions via regulation of actin dynamics. Required for the centralization of the mitotic spindle and symmetric division of zygotes. Plays a role in the regulation of cell morphology and cytoskeletal organization in epithelial cells. Required for the up-regulation of atypical chemokine receptor ACKR2 from endosomal compartment to cell membrane, increasing its efficiency in chemokine uptake and degradation. Required for neural tube morphogenesis and neural crest cell migration. In Mus musculus (Mouse), this protein is Cofilin-1 (Cfl1).